Here is a 455-residue protein sequence, read N- to C-terminus: UDP-N-acetylmuramoylalanine--D-glutamate ligase (455 aa).

ATP is bound at residue 119–125 (GTNGKTT).

The protein belongs to the MurCDEF family.

Its subcellular location is the cytoplasm. It catalyses the reaction UDP-N-acetyl-alpha-D-muramoyl-L-alanine + D-glutamate + ATP = UDP-N-acetyl-alpha-D-muramoyl-L-alanyl-D-glutamate + ADP + phosphate + H(+). It participates in cell wall biogenesis; peptidoglycan biosynthesis. Its function is as follows. Cell wall formation. Catalyzes the addition of glutamate to the nucleotide precursor UDP-N-acetylmuramoyl-L-alanine (UMA). This is UDP-N-acetylmuramoylalanine--D-glutamate ligase from Listeria monocytogenes serovar 1/2a (strain ATCC BAA-679 / EGD-e).